Reading from the N-terminus, the 61-residue chain is Small ribosomal subunit protein uS14 (61 aa).

Positions 24, 27, 40, and 43 each coordinate Zn(2+).

Belongs to the universal ribosomal protein uS14 family. Zinc-binding uS14 subfamily. Part of the 30S ribosomal subunit. Contacts proteins S3 and S10. Requires Zn(2+) as cofactor.

Its function is as follows. Binds 16S rRNA, required for the assembly of 30S particles and may also be responsible for determining the conformation of the 16S rRNA at the A site. The polypeptide is Small ribosomal subunit protein uS14 (Bacillus anthracis (strain A0248)).